Here is a 387-residue protein sequence, read N- to C-terminus: 3-ketoacyl-CoA thiolase (387 aa).

Cys91 functions as the Acyl-thioester intermediate in the catalytic mechanism. Active-site proton acceptor residues include His343 and Cys373.

The protein belongs to the thiolase-like superfamily. Thiolase family. In terms of assembly, heterotetramer of two alpha chains (FadB) and two beta chains (FadA).

The protein resides in the cytoplasm. The enzyme catalyses an acyl-CoA + acetyl-CoA = a 3-oxoacyl-CoA + CoA. Its pathway is lipid metabolism; fatty acid beta-oxidation. Functionally, catalyzes the final step of fatty acid oxidation in which acetyl-CoA is released and the CoA ester of a fatty acid two carbons shorter is formed. This chain is 3-ketoacyl-CoA thiolase, found in Erwinia tasmaniensis (strain DSM 17950 / CFBP 7177 / CIP 109463 / NCPPB 4357 / Et1/99).